Consider the following 375-residue polypeptide: Alcohol dehydrogenase 1 (375 aa).

Ala1 carries the N-acetylalanine modification. Residues Cys46, His68, Cys98, Cys101, Cys104, Cys112, and Cys175 each coordinate Zn(2+). Residues 200-205 (GLGGVG), Asp224, Lys229, 293-295 (VGL), and Arg370 contribute to the NAD(+) site.

It belongs to the zinc-containing alcohol dehydrogenase family. Class-I subfamily. Zn(2+) is required as a cofactor.

The protein localises to the cytoplasm. It carries out the reaction a primary alcohol + NAD(+) = an aldehyde + NADH + H(+). It catalyses the reaction a secondary alcohol + NAD(+) = a ketone + NADH + H(+). The polypeptide is Alcohol dehydrogenase 1 (Pelophylax perezi (Perez's frog)).